A 259-amino-acid polypeptide reads, in one-letter code: Putative carbamate hydrolase RutD (259 aa).

Belongs to the AB hydrolase superfamily. Hydrolase RutD family.

It carries out the reaction carbamate + 2 H(+) = NH4(+) + CO2. Involved in pyrimidine catabolism. May facilitate the hydrolysis of carbamate, a reaction that can also occur spontaneously. This Pseudomonas savastanoi pv. phaseolicola (strain 1448A / Race 6) (Pseudomonas syringae pv. phaseolicola (strain 1448A / Race 6)) protein is Putative carbamate hydrolase RutD.